The sequence spans 229 residues: Uracil-DNA glycosylase (229 aa).

Residue D64 is the Proton acceptor of the active site.

This sequence belongs to the uracil-DNA glycosylase (UDG) superfamily. UNG family.

The protein resides in the cytoplasm. The enzyme catalyses Hydrolyzes single-stranded DNA or mismatched double-stranded DNA and polynucleotides, releasing free uracil.. In terms of biological role, excises uracil residues from the DNA which can arise as a result of misincorporation of dUMP residues by DNA polymerase or due to deamination of cytosine. The polypeptide is Uracil-DNA glycosylase (Escherichia coli O7:K1 (strain IAI39 / ExPEC)).